Reading from the N-terminus, the 164-residue chain is Peroxynitrite isomerase 2 (164 aa).

The short motif at 17–23 (GSWAGRG) is the GXWXGXG element. His-155 serves as a coordination point for heme b.

It belongs to the nitrobindin family. As to quaternary structure, homodimer. The cofactor is heme b.

The enzyme catalyses peroxynitrite = nitrate. It functions in the pathway nitrogen metabolism. Its function is as follows. Heme-binding protein able to scavenge peroxynitrite and to protect free L-tyrosine against peroxynitrite-mediated nitration, by acting as a peroxynitrite isomerase that converts peroxynitrite to nitrate. Therefore, this protein likely plays a role in peroxynitrite sensing and in the detoxification of reactive nitrogen and oxygen species (RNS and ROS, respectively). Is able to bind nitric oxide (NO) in vitro, but may act as a sensor of peroxynitrite levels in vivo. The sequence is that of Peroxynitrite isomerase 2 from Mycobacterium bovis (strain BCG / Pasteur 1173P2).